A 31-amino-acid chain; its full sequence is Chassatide C5 (31 aa).

The cyclopeptide (Gly-Asn) cross-link spans Gly1–Asn31. 3 cysteine pairs are disulfide-bonded: Cys5–Cys21, Cys9–Cys23, and Cys14–Cys28.

In terms of processing, this is a cyclic peptide. Expressed in pedicel, root and stem but not in leaf and fruit (at protein level).

Its function is as follows. Probably participates in a plant defense mechanism. The sequence is that of Chassatide C5 from Chassalia chartacea (Chassalia curviflora).